A 218-amino-acid chain; its full sequence is Riboflavin synthase (218 aa).

Lumazine-binding repeat units lie at residues 1–97 (MFTG…LGGH) and 98–194 (LVSG…EKLI). Residues 4 to 6 (GII), 48 to 50 (CLT), 62 to 67 (DLSLET), 101 to 103 (GHV), Lys-136, 145 to 147 (SLT), and 159 to 164 (TIVPHT) each bind 2,4-dihydroxypteridine.

Homotrimer.

It carries out the reaction 2 6,7-dimethyl-8-(1-D-ribityl)lumazine + H(+) = 5-amino-6-(D-ribitylamino)uracil + riboflavin. It participates in cofactor biosynthesis; riboflavin biosynthesis; riboflavin from 2-hydroxy-3-oxobutyl phosphate and 5-amino-6-(D-ribitylamino)uracil: step 2/2. Catalyzes the dismutation of two molecules of 6,7-dimethyl-8-ribityllumazine, resulting in the formation of riboflavin and 5-amino-6-(D-ribitylamino)uracil. The polypeptide is Riboflavin synthase (ribE) (Photobacterium leiognathi).